The sequence spans 422 residues: 5-hydroxytryptamine receptor 1A (422 aa).

Topologically, residues 1–38 are extracellular; that stretch reads MDVFSFGQGNNTTASQEPFGTGGNVTSISDVTFSYQVI. 3 N-linked (GlcNAc...) asparagine glycosylation sites follow: N10, N11, and N24. A helical transmembrane segment spans residues 39–59; that stretch reads TSLLLGTLIFCAVLGNACVVA. The Cytoplasmic segment spans residues 60–73; sequence AIALERSLQNVANY. A helical transmembrane segment spans residues 74–98; sequence LIGSLAVTDLMVSVLVLPMAALYQV. At 99–107 the chain is on the extracellular side; the sequence is LNKWTLGQV. The helical transmembrane segment at 108 to 132 threads the bilayer; the sequence is TCDLFIALDVLCCTSSILHLCAIAL. A disulfide bridge connects residues C109 and C187. Positions 116 and 120 each coordinate serotonin. Positions 133 to 135 match the DRY motif; important for ligand-induced conformation changes motif; the sequence is DRY. The Cytoplasmic portion of the chain corresponds to 133–152; sequence DRYWAITDPIDYVNKRTPRR. Residues 153 to 174 form a helical membrane-spanning segment; sequence AAALISLTWLIGFLISIPPMLG. At 175 to 193 the chain is on the extracellular side; the sequence is WRTPEDRSDPDACTISKDH. A helical membrane pass occupies residues 194 to 216; the sequence is GYTIYSTFGAFYIPLLLMLVLYG. Residues 217 to 346 are Cytoplasmic-facing; sequence RIFRAARFRI…LARERKTVKT (130 aa). A disordered region spans residues 235–261; that stretch reads KKGAGTSLGTSSAPPPKKSLNGQPGSG. Residues K345, T346, and G352 each coordinate 1D-myo-inositol 4-phosphate. A helical transmembrane segment spans residues 347–370; the sequence is LGIIMGTFILCWLPFFIVALVLPF. Residues 371 to 378 are Extracellular-facing; sequence CESSCHMP. A helical transmembrane segment spans residues 379–403; it reads ALLGAIINWLGYSNSLLNPVIYAYF. An NPxxY motif; important for ligand-induced conformation changes and signaling motif is present at residues 396–400; it reads NPVIY. Residues F403, N404, and K405 each coordinate 1D-myo-inositol 4-phosphate. Over 404 to 422 the chain is Cytoplasmic; the sequence is NKDFQNAFKKIIKCKFCRR.

The protein belongs to the G-protein coupled receptor 1 family. 5-hydroxytryptamine receptor subfamily. HTR1A sub-subfamily. As to quaternary structure, heterodimer; heterodimerizes with GPER1. Interacts with YIF1B. Interacts with GPR39 and GALR1. In terms of tissue distribution, detected in hypothalamus, mesencephalon, amygdala, medulla, thalamus, septum and hippocampus.

The protein resides in the cell membrane. It is found in the cell projection. The protein localises to the dendrite. G-protein coupled receptor activity is regulated by lipids: phosphatidylinositol 4-phosphate increases HTR1A-mediated activity. In terms of biological role, G-protein coupled receptor for 5-hydroxytryptamine (serotonin). Also functions as a receptor for various drugs and psychoactive substances. Ligand binding causes a conformation change that triggers signaling via guanine nucleotide-binding proteins (G proteins) and modulates the activity of downstream effectors, such as adenylate cyclase. HTR1A is coupled to G(i)/G(o) G alpha proteins and mediates inhibitory neurotransmission: signaling inhibits adenylate cyclase activity and activates a phosphatidylinositol-calcium second messenger system that regulates the release of Ca(2+) ions from intracellular stores. Beta-arrestin family members regulate signaling by mediating both receptor desensitization and resensitization processes. The polypeptide is 5-hydroxytryptamine receptor 1A (Rattus norvegicus (Rat)).